The following is a 52-amino-acid chain: Ribosome modulation factor (52 aa).

It belongs to the ribosome modulation factor family.

Its subcellular location is the cytoplasm. Its function is as follows. During stationary phase, converts 70S ribosomes to an inactive dimeric form (100S ribosomes). The sequence is that of Ribosome modulation factor from Xenorhabdus nematophila (strain ATCC 19061 / DSM 3370 / CCUG 14189 / LMG 1036 / NCIMB 9965 / AN6).